Reading from the N-terminus, the 393-residue chain is Formate-dependent phosphoribosylglycinamide formyltransferase (393 aa).

Residues 22–23 (EL) and E82 contribute to the N(1)-(5-phospho-beta-D-ribosyl)glycinamide site. Residues R114, K155, 160 to 165 (SSGKGQ), 195 to 198 (EGFI), and E203 contribute to the ATP site. An ATP-grasp domain is found at 119 to 308 (RLAAEELKLP…QFALHARAIL (190 aa)). Mg(2+)-binding residues include E267 and E279. Residues D286, K356, and 363–364 (RR) contribute to the N(1)-(5-phospho-beta-D-ribosyl)glycinamide site.

This sequence belongs to the PurK/PurT family. In terms of assembly, homodimer.

It carries out the reaction N(1)-(5-phospho-beta-D-ribosyl)glycinamide + formate + ATP = N(2)-formyl-N(1)-(5-phospho-beta-D-ribosyl)glycinamide + ADP + phosphate + H(+). Its pathway is purine metabolism; IMP biosynthesis via de novo pathway; N(2)-formyl-N(1)-(5-phospho-D-ribosyl)glycinamide from N(1)-(5-phospho-D-ribosyl)glycinamide (formate route): step 1/1. Involved in the de novo purine biosynthesis. Catalyzes the transfer of formate to 5-phospho-ribosyl-glycinamide (GAR), producing 5-phospho-ribosyl-N-formylglycinamide (FGAR). Formate is provided by PurU via hydrolysis of 10-formyl-tetrahydrofolate. This chain is Formate-dependent phosphoribosylglycinamide formyltransferase, found in Pseudomonas savastanoi pv. phaseolicola (strain 1448A / Race 6) (Pseudomonas syringae pv. phaseolicola (strain 1448A / Race 6)).